The following is a 477-amino-acid chain: Argininosuccinate lyase (477 aa).

The protein belongs to the lyase 1 family. Argininosuccinate lyase subfamily.

The protein resides in the cytoplasm. It catalyses the reaction 2-(N(omega)-L-arginino)succinate = fumarate + L-arginine. It participates in amino-acid biosynthesis; L-arginine biosynthesis; L-arginine from L-ornithine and carbamoyl phosphate: step 3/3. The sequence is that of Argininosuccinate lyase from Acinetobacter baumannii (strain AB307-0294).